Reading from the N-terminus, the 148-residue chain is Large ribosomal subunit protein uL15 (148 aa).

The span at 1–12 (MSEPIKLHDLRP) shows a compositional bias: basic and acidic residues. The disordered stretch occupies residues 1–52 (MSEPIKLHDLRPAKGANKPKTRVGRGEASKGKTAGRGTKGTKARKQVSAAFE).

The protein belongs to the universal ribosomal protein uL15 family. Part of the 50S ribosomal subunit.

In terms of biological role, binds to the 23S rRNA. The sequence is that of Large ribosomal subunit protein uL15 from Corynebacterium diphtheriae (strain ATCC 700971 / NCTC 13129 / Biotype gravis).